Reading from the N-terminus, the 272-residue chain is NH(3)-dependent NAD(+) synthetase (272 aa).

45–52 (GISGGQDS) is a binding site for ATP. Asp-51 serves as a coordination point for Mg(2+). Arg-138 contacts deamido-NAD(+). Thr-158 is an ATP binding site. A Mg(2+)-binding site is contributed by Glu-163. Deamido-NAD(+) contacts are provided by Lys-171 and Asp-178. Residues Lys-187 and Thr-209 each contribute to the ATP site. Residue 258–259 (HK) coordinates deamido-NAD(+).

It belongs to the NAD synthetase family. In terms of assembly, homodimer.

It carries out the reaction deamido-NAD(+) + NH4(+) + ATP = AMP + diphosphate + NAD(+) + H(+). The protein operates within cofactor biosynthesis; NAD(+) biosynthesis; NAD(+) from deamido-NAD(+) (ammonia route): step 1/1. Its function is as follows. Catalyzes the ATP-dependent amidation of deamido-NAD to form NAD. Uses ammonia as a nitrogen source. The polypeptide is NH(3)-dependent NAD(+) synthetase (Bacillus cereus (strain Q1)).